We begin with the raw amino-acid sequence, 449 residues long: Elongation factor 1-alpha (449 aa).

The 226-residue stretch at 5–230 folds into the tr-type G domain; that stretch reads KVHINIVVIG…DQIQEPKRPS (226 aa). Residues 14-21 form a G1 region; the sequence is GHVDSGKS. 14-21 lines the GTP pocket; the sequence is GHVDSGKS. Position 55 is an N6,N6-dimethyllysine (K55). The segment at 70 to 74 is G2; that stretch reads GITID. Residue K79 is modified to N6,N6,N6-trimethyllysine. A G3 region spans residues 91–94; the sequence is DAPG. GTP contacts are provided by residues 91-95 and 153-156; these read DAPGH and NKMD. The segment at 153-156 is G4; sequence NKMD. N6,N6,N6-trimethyllysine is present on K187. Residues 194–196 form a G5 region; sequence SGF. At K261 the chain carries N6-methyllysine. 5-glutamyl glycerylphosphorylethanolamine is present on E289. K306 carries the N6,N6,N6-trimethyllysine modification. A 5-glutamyl glycerylphosphorylethanolamine modification is found at E362. At K396 the chain carries N6,N6,N6-trimethyllysine.

The protein belongs to the TRAFAC class translation factor GTPase superfamily. Classic translation factor GTPase family. EF-Tu/EF-1A subfamily.

It localises to the cytoplasm. This protein promotes the GTP-dependent binding of aminoacyl-tRNA to the A-site of ribosomes during protein biosynthesis. The sequence is that of Elongation factor 1-alpha (EF1) from Manihot esculenta (Cassava).